The sequence spans 505 residues: Forkhead box protein O4 (505 aa).

3 disordered regions span residues 1 to 66 (MDPE…HSEP), 175 to 244 (SSWW…SPCP), and 257 to 276 (RPRS…PMRP). Phosphothreonine; by PKB/AKT1 is present on Thr-32. Residues 97–215 (RRNAWGNQSY…RGRSKGPKKK (119 aa)) are required for interaction with FOXK1. Residues 100-188 (AWGNQSYAEL…MLNPDGGKGG (89 aa)) constitute a DNA-binding region (fork-head). A Phosphoserine; by PKB/AKT1 modification is found at Ser-197. A compositionally biased stretch (basic residues) spans 205–216 (LRGRSKGPKKKP). Polar residues predominate over residues 257–271 (RPRSSSNASTVSTRL). Ser-262 carries the phosphoserine; by PKB/AKT1 modification.

As to quaternary structure, interacts with CREBBP/CBP, MYOCD, SIRT1, SRF and YWHAZ. Acetylated by CREBBP/CBP and deacetylated by SIRT1. Binding of YWHAZ inhibits DNA-binding. Interacts with USP7; the interaction is enhanced in presence of hydrogen peroxide and occurs independently of TP53. Interacts with NLK, and this inhibits monoubiquitination and transcriptional activity. Interacts with FOXK1; the interaction inhibits MEF2C transactivation activity. Acetylation by CREBBP/CBP is induced by oxidative stress and inhibits transcriptional activity. Deacetylation by SIRT1 is NAD-dependent and stimulates transcriptional activity. Post-translationally, phosphorylation by PKB/AKT1 inhibits transcriptional activity and is responsible for cytoplasmic localization. May be phosphorylated at multiple sites by NLK. In terms of processing, monoubiquitinated; monoubiquitination is induced by oxidative stress and reduced by deacetylase inhibitors; results in its relocalization to the nucleus and its increased transcriptional activity. Deubiquitinated by USP7; deubiquitination is induced by oxidative stress; enhances its interaction with USP7 and consequently, deubiquitination; increases its translocation to the cytoplasm and inhibits its transcriptional activity. Hydrogene-peroxide-induced ubiquitination and USP7-mediated deubiquitination have no major effect on its protein stability. Strongly expressed in brown adipose tissue and weakly in white adipose tissue (at protein level). Expressed in skeletal muscle.

Its subcellular location is the cytoplasm. It localises to the nucleus. Transcription factor involved in the regulation of the insulin signaling pathway. Binds to insulin-response elements (IREs) and can activate transcription of IGFBP1. Down-regulates expression of HIF1A and suppresses hypoxia-induced transcriptional activation of HIF1A-modulated genes. Also involved in negative regulation of the cell cycle. Involved in increased proteasome activity in embryonic stem cells (ESCs) by activating expression of PSMD11 in ESCs, leading to enhanced assembly of the 26S proteasome, followed by higher proteasome activity. Represses smooth muscle cell differentiation by inhibiting the transcriptional coactivator activity of myocardin. This chain is Forkhead box protein O4 (Foxo4), found in Mus musculus (Mouse).